Here is a 90-residue protein sequence, read N- to C-terminus: Barrier-to-autointegration factor-like protein (90 aa).

This sequence belongs to the BAF family. Homodimer. Heterodimerizes with BANF1.

It is found in the nucleus. The protein localises to the cytoplasm. Its function is as follows. May play a role in BANF1 regulation and influence tissue-specific roles of BANF1. The protein is Barrier-to-autointegration factor-like protein (BANF2) of Bos taurus (Bovine).